We begin with the raw amino-acid sequence, 90 residues long: UPF0213 protein lwe0147 (90 aa).

The region spanning 5-83 (NEHFFYVLKC…SRKNKDSYLI (79 aa)) is the GIY-YIG domain.

Belongs to the UPF0213 family.

The polypeptide is UPF0213 protein lwe0147 (Listeria welshimeri serovar 6b (strain ATCC 35897 / DSM 20650 / CCUG 15529 / CIP 8149 / NCTC 11857 / SLCC 5334 / V8)).